We begin with the raw amino-acid sequence, 137 residues long: ATP synthase epsilon chain, chloroplastic (137 aa).

The protein belongs to the ATPase epsilon chain family. As to quaternary structure, F-type ATPases have 2 components, CF(1) - the catalytic core - and CF(0) - the membrane proton channel. CF(1) has five subunits: alpha(3), beta(3), gamma(1), delta(1), epsilon(1). CF(0) has three main subunits: a, b and c.

Its subcellular location is the plastid. It localises to the chloroplast thylakoid membrane. Functionally, produces ATP from ADP in the presence of a proton gradient across the membrane. The polypeptide is ATP synthase epsilon chain, chloroplastic (Pinus koraiensis (Korean pine)).